Reading from the N-terminus, the 100-residue chain is NADH-quinone oxidoreductase subunit K (100 aa).

A run of 3 helical transmembrane segments spans residues 2 to 22 (IGLSHYLIVSALIFSIGLMGV), 29 to 49 (LMLFFATEVMLNAVNIAFAAI), and 63 to 83 (FFIIAIAASEVAVGLGILIVL).

Belongs to the complex I subunit 4L family. As to quaternary structure, NDH-1 is composed of 14 different subunits. Subunits NuoA, H, J, K, L, M, N constitute the membrane sector of the complex.

It localises to the cell inner membrane. The enzyme catalyses a quinone + NADH + 5 H(+)(in) = a quinol + NAD(+) + 4 H(+)(out). NDH-1 shuttles electrons from NADH, via FMN and iron-sulfur (Fe-S) centers, to quinones in the respiratory chain. The immediate electron acceptor for the enzyme in this species is believed to be ubiquinone. Couples the redox reaction to proton translocation (for every two electrons transferred, four hydrogen ions are translocated across the cytoplasmic membrane), and thus conserves the redox energy in a proton gradient. This is NADH-quinone oxidoreductase subunit K from Sulfurovum sp. (strain NBC37-1).